The primary structure comprises 431 residues: Serine--tRNA ligase (431 aa).

235-237 (TSE) contacts L-serine. Residue 266–268 (RSE) coordinates ATP. E289 is an L-serine binding site. 353–356 (EISS) lines the ATP pocket. An L-serine-binding site is contributed by S388.

It belongs to the class-II aminoacyl-tRNA synthetase family. Type-1 seryl-tRNA synthetase subfamily. As to quaternary structure, homodimer. The tRNA molecule binds across the dimer.

The protein resides in the cytoplasm. It carries out the reaction tRNA(Ser) + L-serine + ATP = L-seryl-tRNA(Ser) + AMP + diphosphate + H(+). The catalysed reaction is tRNA(Sec) + L-serine + ATP = L-seryl-tRNA(Sec) + AMP + diphosphate + H(+). The protein operates within aminoacyl-tRNA biosynthesis; selenocysteinyl-tRNA(Sec) biosynthesis; L-seryl-tRNA(Sec) from L-serine and tRNA(Sec): step 1/1. In terms of biological role, catalyzes the attachment of serine to tRNA(Ser). Is also able to aminoacylate tRNA(Sec) with serine, to form the misacylated tRNA L-seryl-tRNA(Sec), which will be further converted into selenocysteinyl-tRNA(Sec). The sequence is that of Serine--tRNA ligase from Paraburkholderia phytofirmans (strain DSM 17436 / LMG 22146 / PsJN) (Burkholderia phytofirmans).